A 328-amino-acid chain; its full sequence is uncharacterized protein (328 aa).

Residues Met-1 to Ala-25 form the signal peptide.

It belongs to the bacterial solute-binding protein 7 family.

Its subcellular location is the periplasm. This is an uncharacterized protein from Haemophilus influenzae (strain ATCC 51907 / DSM 11121 / KW20 / Rd).